Here is a 224-residue protein sequence, read N- to C-terminus: Protein GrpE (224 aa).

Residues 27 to 77 (NQASEDIDQENQSEVVDDTTENEDASEEVYEEDTASEDGSKEKKSFFKKKE) form a disordered region. Positions 31-62 (EDIDQENQSEVVDDTTENEDASEEVYEEDTAS) are enriched in acidic residues.

The protein belongs to the GrpE family. In terms of assembly, homodimer.

The protein localises to the cytoplasm. Functionally, participates actively in the response to hyperosmotic and heat shock by preventing the aggregation of stress-denatured proteins, in association with DnaK and GrpE. It is the nucleotide exchange factor for DnaK and may function as a thermosensor. Unfolded proteins bind initially to DnaJ; upon interaction with the DnaJ-bound protein, DnaK hydrolyzes its bound ATP, resulting in the formation of a stable complex. GrpE releases ADP from DnaK; ATP binding to DnaK triggers the release of the substrate protein, thus completing the reaction cycle. Several rounds of ATP-dependent interactions between DnaJ, DnaK and GrpE are required for fully efficient folding. This Lachnoclostridium phytofermentans (strain ATCC 700394 / DSM 18823 / ISDg) (Clostridium phytofermentans) protein is Protein GrpE.